Here is a 217-residue protein sequence, read N- to C-terminus: MSEPMMWLLVRGVWETLAMTFVSGFFGFVVGLPVGVLLYVTRPGQIIANAKLYRTVSAIVNIFRSIPFIILLVWMIPFTRVIVGTSIGLQAAIVPLTVGAAPFIARMVENALLEIPTGLIEASRAMGATPMQIVRKVLLPEALPGLVNAATITLITLVGYSAMGGAVGAGGLGQIGYQYGYIGYNATVMNTVLVLLVILVYLIQFAGDRIVRAVTRK.

The Periplasmic segment spans residues 1–19; sequence MSEPMMWLLVRGVWETLAM. The region spanning 13 to 204 is the ABC transmembrane type-1 domain; it reads VWETLAMTFV…LLVILVYLIQ (192 aa). A helical transmembrane segment spans residues 20 to 40; sequence TFVSGFFGFVVGLPVGVLLYV. Residues 41-57 are Cytoplasmic-facing; sequence TRPGQIIANAKLYRTVS. Residues 58 to 78 form a helical membrane-spanning segment; sequence AIVNIFRSIPFIILLVWMIPF. The Periplasmic portion of the chain corresponds to 79 to 80; sequence TR. Residues 81 to 101 form a helical membrane-spanning segment; it reads VIVGTSIGLQAAIVPLTVGAA. Topologically, residues 102-151 are cytoplasmic; the sequence is PFIARMVENALLEIPTGLIEASRAMGATPMQIVRKVLLPEALPGLVNAAT. A helical membrane pass occupies residues 152-172; the sequence is ITLITLVGYSAMGGAVGAGGL. Over 173–185 the chain is Periplasmic; it reads GQIGYQYGYIGYN. A helical transmembrane segment spans residues 186-206; the sequence is ATVMNTVLVLLVILVYLIQFA. Topologically, residues 207–217 are cytoplasmic; the sequence is GDRIVRAVTRK.

Belongs to the binding-protein-dependent transport system permease family. CysTW subfamily.

Its subcellular location is the cell inner membrane. Its function is as follows. Part of the binding-protein-dependent transport system for D-methionine and the toxic methionine analog alpha-methyl-methionine. Probably responsible for the translocation of the substrate across the membrane. In Escherichia coli O157:H7, this protein is D-methionine transport system permease protein MetI (metI).